Consider the following 317-residue polypeptide: Annexin D2 (317 aa).

N-acetylalanine is present on Ala-2. Annexin repeat units follow at residues 11-82, 83-154, 166-238, and 242-313; these read PLPE…LWTL, DPPE…PLVS, MLAR…AVIT, and YPEK…ALLG. Positions 24, 26, 28, and 68 each coordinate Ca(2+). Ser-95 is modified (phosphoserine). A phosphothreonine mark is found at Thr-100 and Thr-112. Tyr-129 is subject to Phosphotyrosine. Ca(2+)-binding residues include Ile-255 and Gly-259. Tyr-284 carries the phosphotyrosine modification. Residue Ser-289 is modified to Phosphoserine. Asp-299, Thr-300, and Glu-305 together coordinate Ca(2+).

It belongs to the annexin (TC 1.A.31.1) family. Expressed mainly in roots and flowers. Low in stems and bearly detectable in leaves.

It localises to the cytoplasm. The protein localises to the cytosol. The protein resides in the membrane. Functionally, may mediate regulated, targeted secretion of Golgi-derived vesicles during seedling development. The sequence is that of Annexin D2 (ANN2) from Arabidopsis thaliana (Mouse-ear cress).